We begin with the raw amino-acid sequence, 422 residues long: Serine--tRNA ligase (422 aa).

Residue threonine 230–glutamate 232 coordinates L-serine. Residue arginine 261–glutamate 263 participates in ATP binding. L-serine is bound at residue glutamate 284. Glutamate 347 to serine 350 provides a ligand contact to ATP. An L-serine-binding site is contributed by serine 383.

This sequence belongs to the class-II aminoacyl-tRNA synthetase family. Type-1 seryl-tRNA synthetase subfamily. In terms of assembly, homodimer. The tRNA molecule binds across the dimer.

It is found in the cytoplasm. It carries out the reaction tRNA(Ser) + L-serine + ATP = L-seryl-tRNA(Ser) + AMP + diphosphate + H(+). The enzyme catalyses tRNA(Sec) + L-serine + ATP = L-seryl-tRNA(Sec) + AMP + diphosphate + H(+). It functions in the pathway aminoacyl-tRNA biosynthesis; selenocysteinyl-tRNA(Sec) biosynthesis; L-seryl-tRNA(Sec) from L-serine and tRNA(Sec): step 1/1. In terms of biological role, catalyzes the attachment of serine to tRNA(Ser). Is also able to aminoacylate tRNA(Sec) with serine, to form the misacylated tRNA L-seryl-tRNA(Sec), which will be further converted into selenocysteinyl-tRNA(Sec). This Herpetosiphon aurantiacus (strain ATCC 23779 / DSM 785 / 114-95) protein is Serine--tRNA ligase.